Consider the following 149-residue polypeptide: Large ribosomal subunit protein uL15 (149 aa).

2 stretches are compositionally biased toward basic residues: residues 1–13 (MPTR…KHRG) and 21–42 (RIGK…HHHR). Positions 1-44 (MPTRLTKTRKHRGNVSAGKGRIGKHRKHPGGRGKAGGQHHHRTN) are disordered.

The protein belongs to the universal ribosomal protein uL15 family. Component of the large ribosomal subunit. Mature ribosomes consist of a small (40S) and a large (60S) subunit. The 40S subunit contains about 32 different proteins and 1 molecule of RNA (18S). The 60S subunit contains 45 different proteins and 3 molecules of RNA (25S, 5.8S and 5S).

It localises to the cytoplasm. Its function is as follows. Component of the ribosome, a large ribonucleoprotein complex responsible for the synthesis of proteins in the cell. The small ribosomal subunit (SSU) binds messenger RNAs (mRNAs) and translates the encoded message by selecting cognate aminoacyl-transfer RNA (tRNA) molecules. The large subunit (LSU) contains the ribosomal catalytic site termed the peptidyl transferase center (PTC), which catalyzes the formation of peptide bonds, thereby polymerizing the amino acids delivered by tRNAs into a polypeptide chain. The nascent polypeptides leave the ribosome through a tunnel in the LSU and interact with protein factors that function in enzymatic processing, targeting, and the membrane insertion of nascent chains at the exit of the ribosomal tunnel. The protein is Large ribosomal subunit protein uL15 of Candida albicans (strain SC5314 / ATCC MYA-2876) (Yeast).